The chain runs to 203 residues: Ras-related protein Rab-8B (203 aa).

GTP-binding positions include 22–29 (GDSGVGKS), 70–74 (DTAGQ), and 128–131 (NKCD). S-geranylgeranyl cysteine attachment occurs at residues C202 and C203.

Belongs to the small GTPase superfamily. Rab family.

The protein localises to the cell membrane. In terms of biological role, protein transport. Probably involved in vesicular traffic. The protein is Ras-related protein Rab-8B (rab8B) of Dictyostelium discoideum (Social amoeba).